Reading from the N-terminus, the 221-residue chain is Guanylate kinase (221 aa).

The region spanning 20 to 198 (GSLFMVVAPS…ALAELRTVVQ (179 aa)) is the Guanylate kinase-like domain. Residue 27 to 34 (APSGAGKS) coordinates ATP.

This sequence belongs to the guanylate kinase family.

It is found in the cytoplasm. It carries out the reaction GMP + ATP = GDP + ADP. Its function is as follows. Essential for recycling GMP and indirectly, cGMP. This is Guanylate kinase from Ralstonia nicotianae (strain ATCC BAA-1114 / GMI1000) (Ralstonia solanacearum).